A 320-amino-acid chain; its full sequence is Malate dehydrogenase (320 aa).

Residues 10 to 15 and aspartate 34 contribute to the NAD(+) site; that span reads GAGQIG. Positions 83 and 89 each coordinate substrate. NAD(+) contacts are provided by residues asparagine 96 and 119-121; that span reads ITN. Positions 121 and 152 each coordinate substrate. The Proton acceptor role is filled by histidine 176.

Belongs to the LDH/MDH superfamily. MDH type 3 family.

It carries out the reaction (S)-malate + NAD(+) = oxaloacetate + NADH + H(+). Functionally, catalyzes the reversible oxidation of malate to oxaloacetate. The polypeptide is Malate dehydrogenase (Ruegeria pomeroyi (strain ATCC 700808 / DSM 15171 / DSS-3) (Silicibacter pomeroyi)).